A 308-amino-acid chain; its full sequence is MESLQRLLQGARMGTGMMGDQPLVDNSECVYISSLALLKMLRHGRHGTPMEVMGLMLGEFVDDFTVRVVDVFAMPQSGTGVSVEAVDPVFQKNMMDMLKQTGRPEMVVGWYHSHPGFGCWLSSVDINTQQSFEQLTPRAVAVVVDPIQSVKGKVVIDAFRLINPSTLMMGQEPRQTTSNLGHINKPSIQALIHGLGRHYYSLRINYKKTELEEIMLLNLHKQPWAHGLLLENFNSAAEKNHASIDKMKSLSEQYTERVQNEVTLSPEQLRIQYVGKQDPKKHLDAEVQKCIDNNISSMLACMLDSVAF.

Positions 30-165 (VYISSLALLK…IDAFRLINPS (136 aa)) constitute an MPN domain. Zn(2+)-binding residues include His-112, His-114, and Asp-125. The JAMM motif motif lies at 112–125 (HSHPGFGCWLSSVD).

It belongs to the peptidase M67A family. As to quaternary structure, the 26S proteasome is composed of a core protease, known as the 20S proteasome, capped at one or both ends by the 19S regulatory complex (RC). The RC is composed of at least 18 different subunits in two subcomplexes, the base and the lid, which form the portions proximal and distal to the 20S proteolytic core, respectively.

In terms of biological role, acts as a regulatory subunit of the 26 proteasome which is involved in the ATP-dependent degradation of ubiquitinated proteins. Transcription factor pap1 is controlled by the functional interaction between the positive regulator pad1 and negative regulator crm1. Both these proteins are also essential for cell viability and for the maintenance of chromosome structure. Pad1 is also responsible for resistance to staurosporine, and other drugs such as cycloheximide and caffeine. The chain is 26S proteasome regulatory subunit rpn11 (rpn11) from Schizosaccharomyces pombe (strain 972 / ATCC 24843) (Fission yeast).